A 73-amino-acid polypeptide reads, in one-letter code: Large ribosomal subunit protein bL31 (73 aa).

Belongs to the bacterial ribosomal protein bL31 family. Type A subfamily. Part of the 50S ribosomal subunit.

In terms of biological role, binds the 23S rRNA. The protein is Large ribosomal subunit protein bL31 of Paracoccus denitrificans (strain Pd 1222).